A 1367-amino-acid chain; its full sequence is Collagen alpha-1(XV) chain (1367 aa).

Residues 1–31 (MTHRRTAQGRRPRWLLSIISALLSAVLQTRA) form the signal peptide. The Laminin G-like domain maps to 54–249 (SVSFTTGYGG…SSASGEASGF (196 aa)). Residues 229–604 (RTPEELCEAQ…DIVGNEDLLR (376 aa)) form a nonhelical region 1 (NC1) region. Residues S243 and S247 are each glycosylated (O-linked (Xyl...) (chondroitin sulfate) serine). A disordered region spans residues 267 to 319 (APPKESHVDPISVPPTSSSPAEDSELSGEPVPEGTPETNLSIIGHSSPEQGSG). 2 N-linked (GlcNAc...) asparagine glycosylation sites follow: N305 and N323. The O-linked (Xyl...) (chondroitin sulfate) serine glycan is linked to S341. N-linked (GlcNAc...) asparagine glycans are attached at residues N348, N375, and N402. Disordered regions lie at residues 396–446 (DTPD…SHGE) and 529–784 (TAEP…GHVE). The segment covering 402–429 (NLTTTASGDGEVPTSTDGDTEADSSPTG) has biased composition (polar residues). A compositionally biased stretch (basic and acidic residues) spans 434 to 446 (KPREEATLGSHGE). Residues 555 to 564 (PSGPPLPTPT) show a composition bias toward pro residues. A compositionally biased stretch (gly residues) spans 582-595 (GPVGGLDEGSGSGD). Collagen-like domains are found at residues 605-665 (GPPG…GMKG) and 666-717 (EKGA…PPGP). The triple-helical region 1 (COL1) stretch occupies residues 605 to 718 (GPPGPPGPPG…PGPPGPPGPG (114 aa)). Pro residues predominate over residues 606–616 (PPGPPGPPGSP). Residue N673 is glycosylated (N-linked (GlcNAc...) asparagine). Positions 703 to 717 (MGPPGPPGPPGPPGP) are enriched in pro residues. Positions 719 to 748 (CTTELGFEIEGSGDVRLLSKPTISGPTSPS) are nonhelical region 2 (NC2). S730 carries O-linked (Xyl...) (chondroitin sulfate) serine glycosylation. Over residues 737 to 750 (SKPTISGPTSPSGP) the composition is skewed to low complexity. The triple-helical region 2 (COL2) stretch occupies residues 749 to 783 (GPKGEKGEQGAKGERGADGTSTMGPPGPRGPPGHV). A compositionally biased stretch (basic and acidic residues) spans 751-765 (KGEKGEQGAKGERGA). Residues 784–807 (EVLSSSLINITNGSMNFSDIPELM) form a nonhelical region 3 (NC3) region. N-linked (GlcNAc...) asparagine glycans are attached at residues N792, N795, and N799. 2 consecutive Collagen-like domains span residues 808 to 850 (GPPG…GEPG) and 863 to 912 (KGRK…GDRG). Residues 808 to 852 (GPPGPDGVPGLPGFPGPRGPKGDTGVPGFPGLKGEQGEKGEPGAI) are triple-helical region 3 (COL3). The interval 853–863 (LTGDVPLEMMK) is nonhelical region 4 (NC4). The triple-helical region 4 (COL4) stretch occupies residues 864–934 (GRKGEPGIHG…PGPPGPPGAV (71 aa)). The segment at 905-930 (KGAKGDRGVTLPGPPGLPGPPGPPGP) is disordered. The segment covering 916–930 (PGPPGLPGPPGPPGP) has biased composition (pro residues). A nonhelical region 5 (NC5) region spans residues 935 to 968 (VNIKGAVFPIPARPHCKTPVGTAHPGDPELVTFH). The triple-helical region 5 (COL5) stretch occupies residues 969 to 998 (GVKGEKGSWGLPGSKGEKGDQGAQGPPGPP). Disordered stretches follow at residues 974–1000 (KGSW…PPVD) and 1055–1089 (GPPG…PAIL). The interval 999-1031 (VDPAYLRHFLNSLKGENEDASFRGESSNNLFVS) is nonhelical region 6 (NC6). Residues 1032-1086 (GPPGLPGYPGLVGQKGEAVVGPQGPPGIPGLPGPPGFGRPGVPGPPGPPGPPGPP) are triple-helical region 6 (COL6). A compositionally biased stretch (pro residues) spans 1055 to 1086 (GPPGIPGLPGPPGFGRPGVPGPPGPPGPPGPP). Residues 1087 to 1096 (AILGAAVALP) form a nonhelical region 7 (NC7) region. The tract at residues 1097–1111 (GPPGPPGQPGLPGSR) is triple-helical region 7 (COL7). The tract at residues 1112–1367 (NLVTALSDMG…ENSFMTDTRK (256 aa)) is nonhelical region 8 (NC8). 2 disulfide bridges follow: C1216/C1356 and C1318/C1348.

The protein belongs to the multiplexin collagen family. Trimer; disulfide-linked. In terms of assembly, interacts moderately with EFEMP2. Prolines at the third position of the tripeptide repeating unit (G-X-Y) are hydroxylated in some or all of the chains. Post-translationally, O-glycosylated; contains chondroitin sulfate. Detected in testis, brain, heart, kidney, skeletal muscle and skin (at protein level). Detected in heart and skeletal muscle.

It localises to the secreted. Its subcellular location is the extracellular space. The protein localises to the extracellular matrix. Functionally, structural protein that stabilizes microvessels and muscle cells, both in heart and in skeletal muscle. Restin potently inhibits angiogenesis. The chain is Collagen alpha-1(XV) chain (Col15a1) from Mus musculus (Mouse).